We begin with the raw amino-acid sequence, 418 residues long: Cyclin-dependent kinase 15 (418 aa).

Residues 84–369 (YLNLEKLGEG…AQDALLHPYF (286 aa)) form the Protein kinase domain. Residues 90–98 (LGEGTYATV) and Lys-113 each bind ATP. The active-site Proton acceptor is Asp-205.

Belongs to the protein kinase superfamily. CMGC Ser/Thr protein kinase family. CDC2/CDKX subfamily. Mg(2+) is required as a cofactor.

The catalysed reaction is L-seryl-[protein] + ATP = O-phospho-L-seryl-[protein] + ADP + H(+). It catalyses the reaction L-threonyl-[protein] + ATP = O-phospho-L-threonyl-[protein] + ADP + H(+). Serine/threonine-protein kinase involved in the control of the eukaryotic cell cycle, whose activity is controlled by an associated cyclin. The protein is Cyclin-dependent kinase 15 (cdk15) of Danio rerio (Zebrafish).